The primary structure comprises 27 residues: Cationic protein C1 (27 aa).

It is found in the secreted. The protein resides in the nematocyst. This Bunodosoma caissarum (Sea anemone) protein is Cationic protein C1.